The sequence spans 368 residues: Anhydro-N-acetylmuramic acid kinase (368 aa).

ATP is bound at residue 13-20 (GTSLDGVD).

The protein belongs to the anhydro-N-acetylmuramic acid kinase family.

It catalyses the reaction 1,6-anhydro-N-acetyl-beta-muramate + ATP + H2O = N-acetyl-D-muramate 6-phosphate + ADP + H(+). Its pathway is amino-sugar metabolism; 1,6-anhydro-N-acetylmuramate degradation. It participates in cell wall biogenesis; peptidoglycan recycling. Its function is as follows. Catalyzes the specific phosphorylation of 1,6-anhydro-N-acetylmuramic acid (anhMurNAc) with the simultaneous cleavage of the 1,6-anhydro ring, generating MurNAc-6-P. Is required for the utilization of anhMurNAc either imported from the medium or derived from its own cell wall murein, and thus plays a role in cell wall recycling. This is Anhydro-N-acetylmuramic acid kinase from Hahella chejuensis (strain KCTC 2396).